Reading from the N-terminus, the 675-residue chain is Methionine--tRNA ligase (675 aa).

Positions 15–25 (PYANGSIHLGH) match the 'HIGH' region motif. The Zn(2+) site is built by C146, C149, C159, and C162. Residues 332-336 (KMSKS) carry the 'KMSKS' region motif. Residue K335 coordinates ATP. Residues 573-675 (DFAKVDMRIA…SGAQPGMQVK (103 aa)) form the tRNA-binding domain.

It belongs to the class-I aminoacyl-tRNA synthetase family. MetG type 1 subfamily. Homodimer. Zn(2+) serves as cofactor.

It localises to the cytoplasm. It catalyses the reaction tRNA(Met) + L-methionine + ATP = L-methionyl-tRNA(Met) + AMP + diphosphate. Functionally, is required not only for elongation of protein synthesis but also for the initiation of all mRNA translation through initiator tRNA(fMet) aminoacylation. This is Methionine--tRNA ligase from Yersinia pseudotuberculosis serotype O:3 (strain YPIII).